Consider the following 154-residue polypeptide: UPF0756 membrane protein CKR_1028 (154 aa).

The next 4 helical transmembrane spans lie at 5–25 (IILIIILTASVLGRANSVALA), 48–68 (NGLFLGLVILIASILIPIADG), 82–102 (WLGIFALLVSLFTTYLSGLGM), and 113–133 (IMPALILGAVIAAAFLGGVPV).

It belongs to the UPF0756 family.

It localises to the cell membrane. The chain is UPF0756 membrane protein CKR_1028 from Clostridium kluyveri (strain NBRC 12016).